The primary structure comprises 251 residues: Alanyl-tRNA editing protein AlaX-M (251 aa).

Positions 107, 111, 210, and 214 each coordinate Zn(2+).

This sequence belongs to the class-II aminoacyl-tRNA synthetase family. Editing domain AlaX-M subfamily. Requires Zn(2+) as cofactor.

It is found in the cytoplasm. In terms of biological role, functions in trans to edit the amino acid moiety from mischarged Ser-tRNA(Ala). Recognition depends, at least in part, on the acceptor stem of tRNA(Ala). The sequence is that of Alanyl-tRNA editing protein AlaX-M (alaXM) from Methanosarcina mazei (strain ATCC BAA-159 / DSM 3647 / Goe1 / Go1 / JCM 11833 / OCM 88) (Methanosarcina frisia).